A 307-amino-acid polypeptide reads, in one-letter code: Methionyl-tRNA formyltransferase (307 aa).

108 to 111 (SLLP) contacts (6S)-5,6,7,8-tetrahydrofolate.

This sequence belongs to the Fmt family.

It carries out the reaction L-methionyl-tRNA(fMet) + (6R)-10-formyltetrahydrofolate = N-formyl-L-methionyl-tRNA(fMet) + (6S)-5,6,7,8-tetrahydrofolate + H(+). Its function is as follows. Attaches a formyl group to the free amino group of methionyl-tRNA(fMet). The formyl group appears to play a dual role in the initiator identity of N-formylmethionyl-tRNA by promoting its recognition by IF2 and preventing the misappropriation of this tRNA by the elongation apparatus. The sequence is that of Methionyl-tRNA formyltransferase from Xanthomonas campestris pv. campestris (strain 8004).